The primary structure comprises 212 residues: Large ribosomal subunit protein uL4 (212 aa).

It belongs to the universal ribosomal protein uL4 family. As to quaternary structure, part of the 50S ribosomal subunit.

Functionally, one of the primary rRNA binding proteins, this protein initially binds near the 5'-end of the 23S rRNA. It is important during the early stages of 50S assembly. It makes multiple contacts with different domains of the 23S rRNA in the assembled 50S subunit and ribosome. In terms of biological role, forms part of the polypeptide exit tunnel. The chain is Large ribosomal subunit protein uL4 from Caulobacter sp. (strain K31).